The primary structure comprises 631 residues: Glutamyl-tRNA(Gln) amidotransferase subunit E (631 aa).

The protein belongs to the GatB/GatE family. GatE subfamily. In terms of assembly, heterodimer of GatD and GatE.

The enzyme catalyses L-glutamyl-tRNA(Gln) + L-glutamine + ATP + H2O = L-glutaminyl-tRNA(Gln) + L-glutamate + ADP + phosphate + H(+). Its function is as follows. Allows the formation of correctly charged Gln-tRNA(Gln) through the transamidation of misacylated Glu-tRNA(Gln) in organisms which lack glutaminyl-tRNA synthetase. The reaction takes place in the presence of glutamine and ATP through an activated gamma-phospho-Glu-tRNA(Gln). The GatDE system is specific for glutamate and does not act on aspartate. The chain is Glutamyl-tRNA(Gln) amidotransferase subunit E from Methanococcus maripaludis (strain C7 / ATCC BAA-1331).